We begin with the raw amino-acid sequence, 272 residues long: Petrobactin import ATP-binding protein FpuC (272 aa).

The ABC transporter domain maps to 2–238 (ISVNKVFYAH…EMFQHIFGIE (237 aa)). 34–41 (GPNGSGKS) is a binding site for ATP.

This sequence belongs to the ABC transporter superfamily. As to quaternary structure, the complex is composed of two ATP-binding proteins (FpuC), two transmembrane proteins (FpuB) and a solute-binding protein (FpuA).

The protein resides in the cell membrane. The catalysed reaction is a Fe(III)-siderophore(out) + ATP + H2O = a Fe(III)-siderophore(in) + ADP + phosphate + H(+). In terms of biological role, part of an ABC transporter complex involved in ferric-petrobactin uptake. Probably responsible for energy coupling to the transport system. This Bacillus anthracis protein is Petrobactin import ATP-binding protein FpuC.